Consider the following 456-residue polypeptide: Na(+)/H(+) antiporter NhaA 3 (456 aa).

Helical transmembrane passes span 32–52 (IEAT…TLSN), 87–107 (GLMT…VVLG), 114–134 (MVAL…GLYL), 145–165 (GWGV…ALLG), 174–194 (VFLL…VAVG), 202–222 (TALA…LLGV), 233–253 (AIIW…GVIL), 318–338 (WVAF…PITI), 347–367 (LAVM…FAWL), 382–402 (WGGL…ALFI), and 417–437 (LGIL…LCAL).

Belongs to the NhaA Na(+)/H(+) (TC 2.A.33) antiporter family.

It is found in the cell inner membrane. It catalyses the reaction Na(+)(in) + 2 H(+)(out) = Na(+)(out) + 2 H(+)(in). Its function is as follows. Na(+)/H(+) antiporter that extrudes sodium in exchange for external protons. This chain is Na(+)/H(+) antiporter NhaA 3, found in Acidiphilium cryptum (strain JF-5).